An 84-amino-acid polypeptide reads, in one-letter code: Putative lipoprotein RzoQ (84 aa).

Positions 1 to 22 (MRNRNLLKFLPGLLICLIVLTS) are cleaved as a signal peptide. The N-palmitoyl cysteine moiety is linked to residue Cys-23. Cys-23 is lipidated: S-diacylglycerol cysteine.

Its subcellular location is the cell membrane. This is Putative lipoprotein RzoQ (rzoQ) from Escherichia coli (strain K12).